We begin with the raw amino-acid sequence, 497 residues long: Solute carrier family 2, facilitated glucose transporter member 6 (497 aa).

The Cytoplasmic segment spans residues 1 to 36 (MQEPLLRTEGLDYDTFPEVPATPGERERAGALKNRR). Residues 5 to 6 (LL) carry the Dileucine internalization motif motif. Residues 37–57 (VFLATFAAVLGNFSFGYALVY) traverse the membrane as a helical segment. At 58-80 (TSPVIPELKLSSDPALHLDKIQA) the chain is on the extracellular side. A helical membrane pass occupies residues 81 to 101 (SWFGSVFTLGAAAGGLSAMLL). At 102-115 (NDLLGRKLSIMFSA) the chain is on the cytoplasmic side. The chain crosses the membrane as a helical span at residues 116–136 (VPSAIGYAIMAGARGLWMLLL). The Extracellular portion of the chain corresponds to 137–138 (GR). Residues 139–159 (MLTGFAGGLTAACIPVYVSEI) traverse the membrane as a helical segment. Topologically, residues 160-171 (APPDVRGALGAT) are cytoplasmic. The helical transmembrane segment at 172-192 (PQLMAVFGSLSLYALGLLLPW) threads the bilayer. Residue Q173 participates in a D-hexose binding. A topological domain (extracellular) is located at residue R193. A helical transmembrane segment spans residues 194 to 214 (WLAVAGEGPVLIMILLLSFMP). At 215–273 (NSPRFLLSKSRDEEALQALTWLRADSEVHWEFEQIQDNVRRQSSRVSWAEAREPRVYRP) the chain is on the cytoplasmic side. Residues 274 to 294 (VLIAVLMRFLQQLTGITPILV) traverse the membrane as a helical segment. 284–285 (QQ) provides a ligand contact to a D-hexose. Over 295–312 (YLQTIFDNTSVVLPSQQD) the chain is Extracellular. The N-linked (GlcNAc...) asparagine glycan is linked to N302. Residues 313 to 333 (AAIVGAVRLLSVLIAAVTMDL) traverse the membrane as a helical segment. The Cytoplasmic portion of the chain corresponds to 334 to 337 (AGRK). The helical transmembrane segment at 338–358 (VLLYVSASVMFAANLTLGLYV) threads the bilayer. Over 359-385 (QFVPRPLTPNSTVEIVTLGDTAFNYLT) the chain is Extracellular. Residue N368 is glycosylated (N-linked (GlcNAc...) asparagine). The chain crosses the membrane as a helical span at residues 386–406 (LIPLLATMLFIMGYAMGWGPI). Topologically, residues 407-425 (TWLLMSEVLPLRARGVASG) are cytoplasmic. A D-hexose is bound at residue W408. Residues 426-446 (LCVLVSWLTAFVLTNYFLLAV) traverse the membrane as a helical segment. A topological domain (extracellular) is located at residue N447. A helical membrane pass occupies residues 448 to 468 (AFGLQVPFFFFSAICLLSLLF). At 469 to 497 (TGCCVPETRGRSLEQIEAFFHTRRMSFRP) the chain is on the cytoplasmic side.

The protein belongs to the major facilitator superfamily. Sugar transporter (TC 2.A.1.1) family. Mainly expressed in brain and spleen. Also expressed in lung, heart, muscle, liver, kidney, fat, whole blood, testes, ovaries and uterus.

It is found in the lysosome membrane. Its function is as follows. Probable sugar transporter that acts as a regulator of glycolysis in macrophages. Does not transport glucose. The sequence is that of Solute carrier family 2, facilitated glucose transporter member 6 from Mus musculus (Mouse).